The chain runs to 482 residues: 2-succinylbenzoate--CoA ligase (482 aa).

This sequence belongs to the ATP-dependent AMP-binding enzyme family. MenE subfamily.

The enzyme catalyses 2-succinylbenzoate + ATP + CoA = 2-succinylbenzoyl-CoA + AMP + diphosphate. It functions in the pathway quinol/quinone metabolism; 1,4-dihydroxy-2-naphthoate biosynthesis; 1,4-dihydroxy-2-naphthoate from chorismate: step 5/7. It participates in quinol/quinone metabolism; menaquinone biosynthesis. In terms of biological role, converts 2-succinylbenzoate (OSB) to 2-succinylbenzoyl-CoA (OSB-CoA). This Bacillus thuringiensis subsp. konkukian (strain 97-27) protein is 2-succinylbenzoate--CoA ligase.